Reading from the N-terminus, the 430-residue chain is uncharacterized protein (430 aa).

12 helical membrane passes run 18–38 (LFLLTIGGLYSLGIALSNTFV), 49–69 (FIDLAIYNLSIVTMQPITFYL), 80–100 (VFILRFGVIFLAAFYLSVLLA), 109–129 (VLIGAVLGVGYGFYWLAFNVL), 145–165 (FMGILSSSAGMIGPIVAGFVI), 175–195 (TVIFSLSLSLFALAVVMSFFL), 235–255 (IFVFLISVFVFIETNSELALG), 256–276 (TFGLVNSAVSFFAYYFASRLI), 285–305 (ILLGGLILYGALFLILFHMSF), 307–327 (TLLTYGVFIAIGYPLLLVPYV), 353–373 (MFLNAGRIVSILCFLLIVALL), and 377–397 (VGIPLSLAILGIGHPLIYYFV). A disordered region spans residues 407-430 (GENETMEEDGQKRVTEPTLLKGER). The segment covering 415 to 430 (DGQKRVTEPTLLKGER) has biased composition (basic and acidic residues).

Its subcellular location is the cell membrane. This is an uncharacterized protein from Bacillus subtilis (strain 168).